A 415-amino-acid polypeptide reads, in one-letter code: Tyrosine--tRNA ligase (415 aa).

An L-tyrosine-binding site is contributed by Tyr-34. A 'HIGH' region motif is present at residues 39-48 (PTSDSLTVGH). 2 residues coordinate L-tyrosine: Tyr-164 and Gln-168. Positions 225–229 (KFGKS) match the 'KMSKS' region motif. Residue Lys-228 coordinates ATP. The S4 RNA-binding domain occupies 348–414 (IPLSEALVKT…GKKNNSLIIL (67 aa)).

It belongs to the class-I aminoacyl-tRNA synthetase family. TyrS type 1 subfamily. In terms of assembly, homodimer.

Its subcellular location is the cytoplasm. It catalyses the reaction tRNA(Tyr) + L-tyrosine + ATP = L-tyrosyl-tRNA(Tyr) + AMP + diphosphate + H(+). Its function is as follows. Catalyzes the attachment of tyrosine to tRNA(Tyr) in a two-step reaction: tyrosine is first activated by ATP to form Tyr-AMP and then transferred to the acceptor end of tRNA(Tyr). The polypeptide is Tyrosine--tRNA ligase (Phytoplasma australiense).